We begin with the raw amino-acid sequence, 294 residues long: Phosphatidylserine decarboxylase proenzyme (294 aa).

Residues D92, H149, and S252 each act as charge relay system; for autoendoproteolytic cleavage activity in the active site. S252 serves as the catalytic Schiff-base intermediate with substrate; via pyruvic acid; for decarboxylase activity. S252 bears the Pyruvic acid (Ser); by autocatalysis mark.

This sequence belongs to the phosphatidylserine decarboxylase family. PSD-B subfamily. Prokaryotic type I sub-subfamily. In terms of assembly, heterodimer of a large membrane-associated beta subunit and a small pyruvoyl-containing alpha subunit. Requires pyruvate as cofactor. Post-translationally, is synthesized initially as an inactive proenzyme. Formation of the active enzyme involves a self-maturation process in which the active site pyruvoyl group is generated from an internal serine residue via an autocatalytic post-translational modification. Two non-identical subunits are generated from the proenzyme in this reaction, and the pyruvate is formed at the N-terminus of the alpha chain, which is derived from the carboxyl end of the proenzyme. The autoendoproteolytic cleavage occurs by a canonical serine protease mechanism, in which the side chain hydroxyl group of the serine supplies its oxygen atom to form the C-terminus of the beta chain, while the remainder of the serine residue undergoes an oxidative deamination to produce ammonia and the pyruvoyl prosthetic group on the alpha chain. During this reaction, the Ser that is part of the protease active site of the proenzyme becomes the pyruvoyl prosthetic group, which constitutes an essential element of the active site of the mature decarboxylase.

It is found in the cell membrane. The enzyme catalyses a 1,2-diacyl-sn-glycero-3-phospho-L-serine + H(+) = a 1,2-diacyl-sn-glycero-3-phosphoethanolamine + CO2. It participates in phospholipid metabolism; phosphatidylethanolamine biosynthesis; phosphatidylethanolamine from CDP-diacylglycerol: step 2/2. Its function is as follows. Catalyzes the formation of phosphatidylethanolamine (PtdEtn) from phosphatidylserine (PtdSer). This chain is Phosphatidylserine decarboxylase proenzyme, found in Bordetella avium (strain 197N).